Reading from the N-terminus, the 119-residue chain is Beta-2-microglobulin (119 aa).

The N-terminal stretch at 1 to 20 (MFRSVALAVLALLFLSGLEA) is a signal peptide. The region spanning 25 to 114 (PKIQVYSRHP…VTLSGPRTVK (90 aa)) is the Ig-like C1-type domain. Cysteine 45 and cysteine 100 are oxidised to a cystine.

This sequence belongs to the beta-2-microglobulin family. In terms of assembly, heterodimer of an alpha chain and a beta chain. Beta-2-microglobulin is the beta-chain of major histocompatibility complex class I molecules.

The protein resides in the secreted. Functionally, component of the class I major histocompatibility complex (MHC). Involved in the presentation of peptide antigens to the immune system. The protein is Beta-2-microglobulin (B2M) of Chlorocebus aethiops (Green monkey).